Reading from the N-terminus, the 121-residue chain is Small ribosomal subunit protein uS13 (121 aa).

Positions 91-121 (HKRGLPVRGQRTRTNARTRKGPRRAAASLKK) are disordered.

Belongs to the universal ribosomal protein uS13 family. As to quaternary structure, part of the 30S ribosomal subunit. Forms a loose heterodimer with protein S19. Forms two bridges to the 50S subunit in the 70S ribosome.

Located at the top of the head of the 30S subunit, it contacts several helices of the 16S rRNA. In the 70S ribosome it contacts the 23S rRNA (bridge B1a) and protein L5 of the 50S subunit (bridge B1b), connecting the 2 subunits; these bridges are implicated in subunit movement. Contacts the tRNAs in the A and P-sites. In Bordetella avium (strain 197N), this protein is Small ribosomal subunit protein uS13.